A 233-amino-acid polypeptide reads, in one-letter code: Large ribosomal subunit protein uL1 (233 aa).

The protein belongs to the universal ribosomal protein uL1 family. As to quaternary structure, part of the 50S ribosomal subunit.

Functionally, binds directly to 23S rRNA. The L1 stalk is quite mobile in the ribosome, and is involved in E site tRNA release. In terms of biological role, protein L1 is also a translational repressor protein, it controls the translation of the L11 operon by binding to its mRNA. The chain is Large ribosomal subunit protein uL1 from Nautilia profundicola (strain ATCC BAA-1463 / DSM 18972 / AmH).